A 265-amino-acid chain; its full sequence is Ribosomal RNA small subunit methyltransferase A (265 aa).

Asn13, Leu15, Gly40, Glu61, Asp85, and Asn103 together coordinate S-adenosyl-L-methionine.

This sequence belongs to the class I-like SAM-binding methyltransferase superfamily. rRNA adenine N(6)-methyltransferase family. RsmA subfamily.

It is found in the cytoplasm. The catalysed reaction is adenosine(1518)/adenosine(1519) in 16S rRNA + 4 S-adenosyl-L-methionine = N(6)-dimethyladenosine(1518)/N(6)-dimethyladenosine(1519) in 16S rRNA + 4 S-adenosyl-L-homocysteine + 4 H(+). Its function is as follows. Specifically dimethylates two adjacent adenosines (A1518 and A1519) in the loop of a conserved hairpin near the 3'-end of 16S rRNA in the 30S particle. May play a critical role in biogenesis of 30S subunits. The sequence is that of Ribosomal RNA small subunit methyltransferase A from Aromatoleum aromaticum (strain DSM 19018 / LMG 30748 / EbN1) (Azoarcus sp. (strain EbN1)).